Here is a 55-residue protein sequence, read N- to C-terminus: Caltrin-like protein 2 (55 aa).

The WAP domain occupies 7–55 (AINRPGSCPRVMIYCPARHPPNKCTSDYDCPKPQKCCPGYCGKQCYQPE).

Post-translationally, glycosylated.

Inhibits calcium transport into spermatozoa. The protein is Caltrin-like protein 2 of Cavia porcellus (Guinea pig).